The following is a 757-amino-acid chain: Alcohol dehydrogenase (quinone), dehydrogenase subunit (757 aa).

The N-terminal stretch at 1–34 (MTSGLLTPIKVTKKRLLSCAAALAFSAAVPVAFA) is a signal peptide. Residue glutamine 35 is modified to Pyrrolidone carboxylic acid. Glutamate 95 lines the pyrroloquinoline quinone pocket. The cysteines at positions 141 and 142 are disulfide-linked. Arginine 147 is a binding site for pyrroloquinoline quinone. A Ca(2+)-binding site is contributed by glutamate 215. A pyrroloquinoline quinone-binding site is contributed by threonine 277. 2 residues coordinate Ca(2+): asparagine 297 and aspartate 342. Aspartate 342 functions as the Proton acceptor in the catalytic mechanism. The pyrroloquinoline quinone site is built by lysine 369 and isoleucine 588. Residues 640–719 (ARQKDGYFMY…DIRNFIVKRA (80 aa)) form the Cytochrome c domain. Residues cysteine 653, cysteine 656, histidine 657, and methionine 696 each contribute to the heme c site. The segment at 726–757 (EVKARENSTGVPNDQFLNVPQSTADVPTADHP) is disordered. Residues 732–750 (NSTGVPNDQFLNVPQSTAD) show a composition bias toward polar residues.

Belongs to the bacterial PQQ dehydrogenase family. As to quaternary structure, the alcohol dehydrogenase multicomponent enzyme system is composed of a dehydrogenase subunit I (AdhA), a cytochrome c subunit II (AdhB) and a subunit III (AdhS). Pyrroloquinoline quinone is required as a cofactor. Requires Ca(2+) as cofactor. The cofactor is heme c.

The protein localises to the cell membrane. It carries out the reaction ethanol + a ubiquinone = a ubiquinol + acetaldehyde. Its activity is regulated as follows. 2,6-dichloro-4-dicyanovinylphenol (PC16) and antimycin A inhibit ubiquinol oxidation activity more selectively than the ubiquinone reductase activity. Dehydrogenase component of the alcohol dehydrogenase multicomponent enzyme system which is involved in the production of acetic acid and in the ethanol oxidase respiratory chain. Quinohemoprotein alcohol dehydrogenase (ADH) catalyzes the oxidation of ethanol to acetaldehyde by transferring electrons to the ubiquinone embedded in the membrane phospholipids. The electrons transfer from ethanol to membranous ubiquinone occurs from pyrroloquinoline quinone (PQQ) to one heme c in subunit I (AdhA), and finally to two heme c in subunit II (AdhB). Besides ubiquinone reduction, ADH also has a ubiquinol (QH2) oxidation reaction which mediates electron transfer from ubiquinol to the non-energy generating bypass oxidase system. The electrons transfer occurs from ubiquinol (QH2) to the additional heme c within subunit II (AdhB). Also able to use quinone analogs such as 2,3-dimethoxy-5-methyl-6-n-decyl-1,4-benzoquinone (DB) and 2,3-dimethoxy-5-methyl-6-n-pentyl-1,4-benzoquinone (PB). In Gluconobacter oxydans (strain 621H) (Gluconobacter suboxydans), this protein is Alcohol dehydrogenase (quinone), dehydrogenase subunit.